The primary structure comprises 426 residues: F-box protein At2g15640 (426 aa).

The F-box domain occupies 1-48; that stretch reads MNPSTITNDLTVEILSRLPAKSVARFHCVSKQWGSIFGSPYFKELFLT.

This Arabidopsis thaliana (Mouse-ear cress) protein is F-box protein At2g15640.